Reading from the N-terminus, the 493-residue chain is Glutamate--tRNA ligase (493 aa).

The 'HIGH' region signature appears at 9–19; sequence PSPTGFVHIGS. Residues 258 to 262 carry the 'KMSKS' region motif; it reads KLSKR. Lys-261 contributes to the ATP binding site.

Belongs to the class-I aminoacyl-tRNA synthetase family. Glutamate--tRNA ligase type 1 subfamily. Monomer.

It localises to the cytoplasm. It carries out the reaction tRNA(Glu) + L-glutamate + ATP = L-glutamyl-tRNA(Glu) + AMP + diphosphate. In terms of biological role, catalyzes the attachment of glutamate to tRNA(Glu) in a two-step reaction: glutamate is first activated by ATP to form Glu-AMP and then transferred to the acceptor end of tRNA(Glu). The protein is Glutamate--tRNA ligase of Clostridioides difficile (strain 630) (Peptoclostridium difficile).